The primary structure comprises 315 residues: Ribose-phosphate pyrophosphokinase (315 aa).

ATP is bound by residues 37–39 (DGE) and 96–97 (RQ). Mg(2+)-binding residues include H131 and D170. The active site involves K194. D-ribose 5-phosphate contacts are provided by residues R196, D220, and 224–228 (DTGGT).

Belongs to the ribose-phosphate pyrophosphokinase family. Class I subfamily. Homohexamer. Mg(2+) serves as cofactor.

It localises to the cytoplasm. The enzyme catalyses D-ribose 5-phosphate + ATP = 5-phospho-alpha-D-ribose 1-diphosphate + AMP + H(+). The protein operates within metabolic intermediate biosynthesis; 5-phospho-alpha-D-ribose 1-diphosphate biosynthesis; 5-phospho-alpha-D-ribose 1-diphosphate from D-ribose 5-phosphate (route I): step 1/1. Functionally, involved in the biosynthesis of the central metabolite phospho-alpha-D-ribosyl-1-pyrophosphate (PRPP) via the transfer of pyrophosphoryl group from ATP to 1-hydroxyl of ribose-5-phosphate (Rib-5-P). The protein is Ribose-phosphate pyrophosphokinase of Buchnera aphidicola subsp. Acyrthosiphon pisum (strain APS) (Acyrthosiphon pisum symbiotic bacterium).